The chain runs to 180 residues: MLKLLSEIGPVIAFFAGFFYGGGIQSATLYMLITSIICITLCYIIDKKVSKLSIISSTVLFVSGIITLISGDSMYIKIKPTILYVIFGIIFLMSGIRKNPFIKYALESIVRLKEESWIILSYRTAAFFFFMAVVNEVVWRNFSDETWVKFKVFGVIPITFIFILLQLPLLLKNKLPDSKI.

6 helical membrane passes run 4–24 (LLSE…GGGI), 25–45 (QSAT…CYII), 49–69 (VSKL…ITLI), 76–96 (IKIK…MSGI), 118–138 (IILS…NEVV), and 150–170 (FKVF…LPLL).

The protein belongs to the YciB family.

It localises to the cell inner membrane. In terms of biological role, plays a role in cell envelope biogenesis, maintenance of cell envelope integrity and membrane homeostasis. The sequence is that of Inner membrane-spanning protein YciB from Rickettsia typhi (strain ATCC VR-144 / Wilmington).